A 212-amino-acid chain; its full sequence is GrpE protein homolog, mitochondrial (212 aa).

The protein belongs to the GrpE family. As to quaternary structure, component of the PAM complex, at least composed of mtHsp70, MGE1, TIM44, PAM16, PAM17 and PAM18.

The protein resides in the mitochondrion matrix. Functionally, essential component of the PAM complex, a complex required for the translocation of transit peptide-containing proteins from the inner membrane into the mitochondrial matrix in an ATP-dependent manner. Seems to control the nucleotide-dependent binding of SSC1 to substrate proteins. The chain is GrpE protein homolog, mitochondrial (mge1) from Eremothecium gossypii (strain ATCC 10895 / CBS 109.51 / FGSC 9923 / NRRL Y-1056) (Yeast).